We begin with the raw amino-acid sequence, 97 residues long: Small ribosomal subunit protein uS19 (97 aa).

Residues phenylalanine 74–glycine 97 form a disordered region. A compositionally biased stretch (basic and acidic residues) spans glycine 82–glycine 97.

The protein belongs to the universal ribosomal protein uS19 family.

Functionally, protein S19 forms a complex with S13 that binds strongly to the 16S ribosomal RNA. The polypeptide is Small ribosomal subunit protein uS19 (Petrotoga mobilis (strain DSM 10674 / SJ95)).